The primary structure comprises 113 residues: uncharacterized protein (113 aa).

The protein belongs to the ycf68 family.

Its subcellular location is the plastid. The protein localises to the chloroplast. This is an uncharacterized protein from Eucalyptus globulus subsp. globulus (Tasmanian blue gum).